A 406-amino-acid polypeptide reads, in one-letter code: Succinyl-diaminopimelate desuccinylase (406 aa).

His95 contacts Zn(2+). The active site involves Asp97. Residue Asp128 coordinates Zn(2+). Glu162 serves as the catalytic Proton acceptor. Zn(2+)-binding residues include Glu163, Glu191, and His377.

Belongs to the peptidase M20A family. DapE subfamily. Homodimer. Zn(2+) serves as cofactor. It depends on Co(2+) as a cofactor.

The catalysed reaction is N-succinyl-(2S,6S)-2,6-diaminopimelate + H2O = (2S,6S)-2,6-diaminopimelate + succinate. The protein operates within amino-acid biosynthesis; L-lysine biosynthesis via DAP pathway; LL-2,6-diaminopimelate from (S)-tetrahydrodipicolinate (succinylase route): step 3/3. Catalyzes the hydrolysis of N-succinyl-L,L-diaminopimelic acid (SDAP), forming succinate and LL-2,6-diaminopimelate (DAP), an intermediate involved in the bacterial biosynthesis of lysine and meso-diaminopimelic acid, an essential component of bacterial cell walls. The protein is Succinyl-diaminopimelate desuccinylase of Polaromonas naphthalenivorans (strain CJ2).